The chain runs to 122 residues: uncharacterized protein (122 aa).

Its subcellular location is the mitochondrion. This is an uncharacterized protein from Arabidopsis thaliana (Mouse-ear cress).